Here is a 65-residue protein sequence, read N- to C-terminus: Protein YSY6 (65 aa).

Residues 45-65 (LGILLFLLVGGGVLQLISYIL) traverse the membrane as a helical segment.

It belongs to the RAMP4 family.

It localises to the membrane. The protein localises to the endoplasmic reticulum membrane. In terms of biological role, interacts with target proteins during their translocation into the lumen of the endoplasmic reticulum. Protects unfolded target proteins against degradation during ER stress. May facilitate glycosylation of target proteins after termination of ER stress. This Saccharomyces cerevisiae (strain ATCC 204508 / S288c) (Baker's yeast) protein is Protein YSY6 (YSY6).